The sequence spans 225 residues: Small ribosomal subunit protein uS7 (225 aa).

Belongs to the universal ribosomal protein uS7 family. As to quaternary structure, component of the small ribosomal subunit. Mature ribosomes consist of a small (40S) and a large (60S) subunit. The 40S subunit contains about 32 different proteins and 1 molecule of RNA (18S). The 60S subunit contains 45 different proteins and 3 molecules of RNA (25S, 5.8S and 5S).

It localises to the cytoplasm. Its function is as follows. Component of the ribosome, a large ribonucleoprotein complex responsible for the synthesis of proteins in the cell. The small ribosomal subunit (SSU) binds messenger RNAs (mRNAs) and translates the encoded message by selecting cognate aminoacyl-transfer RNA (tRNA) molecules. The large subunit (LSU) contains the ribosomal catalytic site termed the peptidyl transferase center (PTC), which catalyzes the formation of peptide bonds, thereby polymerizing the amino acids delivered by tRNAs into a polypeptide chain. The nascent polypeptides leave the ribosome through a tunnel in the LSU and interact with protein factors that function in enzymatic processing, targeting, and the membrane insertion of nascent chains at the exit of the ribosomal tunnel. The chain is Small ribosomal subunit protein uS7 (RPS5) from Candida albicans (strain SC5314 / ATCC MYA-2876) (Yeast).